The primary structure comprises 416 residues: Transcription factor caaR (416 aa).

Residues Cys-13 to Cys-44 constitute a DNA-binding region (zn(2)-C6 fungal-type). 2 disordered regions span residues Ala-68–Ala-90 and Gln-130–Asn-150. Over residues Gln-130–Arg-141 the composition is skewed to pro residues. The next 2 membrane-spanning stretches (helical) occupy residues Val-249–Leu-269 and Ser-302–Leu-322.

It is found in the membrane. The protein localises to the nucleus. Transcription factor that positively regulates the expression of the gene cluster that mediates the biosynthesis of the acyltetronic acid derivatives carlosic acid, agglomerin F and carlosic acid methyl ether. In Aspergillus niger (strain ATCC MYA-4892 / CBS 513.88 / FGSC A1513), this protein is Transcription factor caaR.